The primary structure comprises 251 residues: 5-oxoprolinase subunit A (251 aa).

Belongs to the LamB/PxpA family. Forms a complex composed of PxpA, PxpB and PxpC.

It carries out the reaction 5-oxo-L-proline + ATP + 2 H2O = L-glutamate + ADP + phosphate + H(+). Its function is as follows. Catalyzes the cleavage of 5-oxoproline to form L-glutamate coupled to the hydrolysis of ATP to ADP and inorganic phosphate. The chain is 5-oxoprolinase subunit A from Paracidovorax citrulli (strain AAC00-1) (Acidovorax citrulli).